Consider the following 59-residue polypeptide: uncharacterized protein (59 aa).

The tract at residues 27–59 (SCFQNRPPEPASFQNLRPEPASLQNLRTEPTSF) is disordered. The segment covering 48–59 (SLQNLRTEPTSF) has biased composition (polar residues).

This is an uncharacterized protein from Homo sapiens (Human).